A 275-amino-acid polypeptide reads, in one-letter code: Interleukin-2 receptor subunit alpha (275 aa).

Positions 1 to 21 (MEPSLLLWGILTFVVVHGHVT) are cleaved as a signal peptide. Residues 22 to 84 (ELCDENPPDI…SWENQCRCIS (63 aa)) form the Sushi 1 domain. The Extracellular portion of the chain corresponds to 22-243 (ELCDENPPDI…ESFVFTTEYQ (222 aa)). 3 disulfide bridges follow: Cys-24–Cys-67, Cys-49–Cys-80, and Cys-51–Cys-82. N-linked (GlcNAc...) asparagine glycosylation is found at Asn-60 and Asn-70. Residues 91–118 (DGQIIPKPEEQKGKSPMGMQSQMQPTDQ) are disordered. Residues 108 to 118 (GMQSQMQPTDQ) show a composition bias toward polar residues. The Sushi 2 domain maps to 123–186 (GHCREPPPWE…WTQPRLQCLS (64 aa)). 2 cysteine pairs are disulfide-bonded: Cys-125/Cys-168 and Cys-152/Cys-184. The segment at 188-213 (RSDGWFPDDEEPQASTDAALGSDTSC) is disordered. The chain crosses the membrane as a helical span at residues 244 to 262 (IAVAGCVLLLISIVLLSGL). The Cytoplasmic portion of the chain corresponds to 263 to 275 (TWQRRWRKSRRTI).

Non-covalent dimer of an alpha and a beta subunit. IL2R exists in 3 different forms: a high affinity dimer, an intermediate affinity monomer (beta subunit), and a low affinity monomer (alpha subunit). The high and intermediate affinity forms also associate with a gamma subunit.

It is found in the membrane. Receptor for interleukin-2. The receptor is involved in the regulation of immune tolerance by controlling regulatory T cells (TREGs) activity. TREGs suppress the activation and expansion of autoreactive T-cells. In Felis catus (Cat), this protein is Interleukin-2 receptor subunit alpha (IL2RA).